The primary structure comprises 208 residues: Ribosomal RNA large subunit methyltransferase E (208 aa).

Glycine 63, tryptophan 65, aspartate 83, aspartate 99, and aspartate 124 together coordinate S-adenosyl-L-methionine. Lysine 164 (proton acceptor) is an active-site residue.

The protein belongs to the class I-like SAM-binding methyltransferase superfamily. RNA methyltransferase RlmE family.

The protein resides in the cytoplasm. The catalysed reaction is uridine(2552) in 23S rRNA + S-adenosyl-L-methionine = 2'-O-methyluridine(2552) in 23S rRNA + S-adenosyl-L-homocysteine + H(+). Its function is as follows. Specifically methylates the uridine in position 2552 of 23S rRNA at the 2'-O position of the ribose in the fully assembled 50S ribosomal subunit. The polypeptide is Ribosomal RNA large subunit methyltransferase E (Enterobacter sp. (strain 638)).